Reading from the N-terminus, the 28-residue chain is Potassium channel toxin alpha-KTx 9.10 (28 aa).

3 disulfide bridges follow: Cys-3–Cys-19, Cys-6–Cys-24, and Cys-10–Cys-26.

The protein belongs to the short scorpion toxin superfamily. Potassium channel inhibitor family. Alpha-KTx 09 subfamily. In terms of tissue distribution, expressed by the venom gland.

It localises to the secreted. Functionally, blocks Shaker potassium channels. The protein is Potassium channel toxin alpha-KTx 9.10 of Mesobuthus eupeus (Lesser Asian scorpion).